The sequence spans 803 residues: Carbon monoxide dehydrogenase large chain (803 aa).

R384 is subject to 4-hydroxyarginine. C385 is a Cu(+) binding site. E757 is a binding site for Mo-molybdopterin cytosine dinucleotide.

Dimer of heterotrimers. Each heterotrimer consists of a large, a medium and a small subunit. Requires Cu(+) as cofactor. Mo-molybdopterin cytosine dinucleotide is required as a cofactor.

The enzyme catalyses CO + a quinone + H2O = a quinol + CO2. Functionally, catalyzes the oxidation of carbon monoxide to carbon dioxide. This Hydrogenophaga pseudoflava (Pseudomonas carboxydoflava) protein is Carbon monoxide dehydrogenase large chain (cutL).